Reading from the N-terminus, the 157-residue chain is Ribosomal RNA large subunit methyltransferase H (157 aa).

Residues Leu-74, Gly-106, and 125–130 (LGNITF) each bind S-adenosyl-L-methionine.

The protein belongs to the RNA methyltransferase RlmH family. As to quaternary structure, homodimer.

The protein localises to the cytoplasm. The catalysed reaction is pseudouridine(1915) in 23S rRNA + S-adenosyl-L-methionine = N(3)-methylpseudouridine(1915) in 23S rRNA + S-adenosyl-L-homocysteine + H(+). Specifically methylates the pseudouridine at position 1915 (m3Psi1915) in 23S rRNA. The chain is Ribosomal RNA large subunit methyltransferase H from Lawsonia intracellularis (strain PHE/MN1-00).